The primary structure comprises 344 residues: Uroporphyrinogen decarboxylase (344 aa).

Residues 29 to 33, D79, Y153, S208, and H324 each bind substrate; that span reads RQAGR.

The protein belongs to the uroporphyrinogen decarboxylase family. Homodimer.

Its subcellular location is the cytoplasm. The enzyme catalyses uroporphyrinogen III + 4 H(+) = coproporphyrinogen III + 4 CO2. It functions in the pathway porphyrin-containing compound metabolism; protoporphyrin-IX biosynthesis; coproporphyrinogen-III from 5-aminolevulinate: step 4/4. In terms of biological role, catalyzes the decarboxylation of four acetate groups of uroporphyrinogen-III to yield coproporphyrinogen-III. This is Uroporphyrinogen decarboxylase from Rhizorhabdus wittichii (strain DSM 6014 / CCUG 31198 / JCM 15750 / NBRC 105917 / EY 4224 / RW1) (Sphingomonas wittichii).